The following is a 460-amino-acid chain: Proton extrusion protein PxcA (460 aa).

Positions 84-194 are disordered; it reads RLPDPEQNGS…KTNLDNSNAP (111 aa). A compositionally biased stretch (basic and acidic residues) spans 114 to 136; the sequence is NDGKDAENGRQSRDPSILEKLEF. A compositionally biased stretch (polar residues) spans 167–194; that stretch reads LTSSQPEPSDPSIKTNLAKTNLDNSNAP. 4 helical membrane passes run 242-262, 337-357, 373-393, and 420-440; these read FLLL…HFLF, GLKN…LILI, IYGL…DVFV, and FIYG…KYWI.

It belongs to the CemA family.

It localises to the cell inner membrane. Required for H(+) efflux immediately after light irradiation to form a rapid H(+) concentration gradient across the thylakoid membranes. Together with PxcL, contributes to transient H(+) uptake following dark to light transition. The polypeptide is Proton extrusion protein PxcA (Synechococcus sp. (strain JA-3-3Ab) (Cyanobacteria bacterium Yellowstone A-Prime)).